A 217-amino-acid chain; its full sequence is Small ribosomal subunit protein uS3 (217 aa).

Positions 29–97 constitute a KH type-2 domain; that stretch reads ADYLHEDLAI…AQLNKLTGKQ (69 aa).

The protein belongs to the universal ribosomal protein uS3 family. Part of the 30S ribosomal subunit. Forms a tight complex with proteins S10 and S14.

Functionally, binds the lower part of the 30S subunit head. Binds mRNA in the 70S ribosome, positioning it for translation. This is Small ribosomal subunit protein uS3 from Streptococcus mutans serotype c (strain ATCC 700610 / UA159).